We begin with the raw amino-acid sequence, 79 residues long: uncharacterized protein (79 aa).

This is an uncharacterized protein from Helicobacter pylori (strain ATCC 700392 / 26695) (Campylobacter pylori).